We begin with the raw amino-acid sequence, 150 residues long: UPF0178 protein PputW619_5044 (150 aa).

It belongs to the UPF0178 family.

In Pseudomonas putida (strain W619), this protein is UPF0178 protein PputW619_5044.